A 207-amino-acid polypeptide reads, in one-letter code: MLSVVKPLQEFGKLDKCLSRYGTRFEFNNEKQVIFSSDVNNEDTFVILEGVISLRREENVLIGITQAPYIMGLADGLMKNDIPYKLISEGNCTGYHLPAKQTITLIEQNQLWRDAFYWLAWQNRILELRDVQLIGHNSYEQIRATLLSMIDWNEELRSRIGVMNYIHQRTRISRSVVAEVLAALRKGGYIEMNKGKLVAINRLPSEY.

A DNA-binding region (H-T-H motif) is located at residues 163 to 182; that stretch reads MNYIHQRTRISRSVVAEVLA.

This sequence belongs to the IprA family.

Functionally, involved in oxidative stress resistance. In Escherichia coli O157:H7, this protein is Inhibitor of hydrogen peroxide resistance.